The primary structure comprises 644 residues: Exoribonuclease 2 (644 aa).

In terms of domain architecture, RNB spans 189 to 516; sequence REDLTALDFV…NHRLLKAVIK (328 aa). The region spanning 561 to 643 is the S1 motif domain; the sequence is DTRFAAEIVD…ETRSIIARPV (83 aa).

The protein belongs to the RNR ribonuclease family. RNase II subfamily.

Its subcellular location is the cytoplasm. The catalysed reaction is Exonucleolytic cleavage in the 3'- to 5'-direction to yield nucleoside 5'-phosphates.. Functionally, involved in mRNA degradation. Hydrolyzes single-stranded polyribonucleotides processively in the 3' to 5' direction. In Escherichia coli (strain SMS-3-5 / SECEC), this protein is Exoribonuclease 2.